Here is a 572-residue protein sequence, read N- to C-terminus: Urease subunit alpha (572 aa).

Residues 136–572 form the Urease domain; the sequence is GGIDTHIHFI…VPLGQRYFLF (437 aa). H141, H143, and K224 together coordinate Ni(2+). K224 is subject to N6-carboxylysine. Position 226 (H226) interacts with substrate. Ni(2+)-binding residues include H253 and H279. H327 (proton donor) is an active-site residue. D367 provides a ligand contact to Ni(2+).

Belongs to the metallo-dependent hydrolases superfamily. Urease alpha subunit family. In terms of assembly, heterotrimer of UreA (gamma), UreB (beta) and UreC (alpha) subunits. Three heterotrimers associate to form the active enzyme. Ni cation serves as cofactor. In terms of processing, carboxylation allows a single lysine to coordinate two nickel ions.

The protein resides in the cytoplasm. It catalyses the reaction urea + 2 H2O + H(+) = hydrogencarbonate + 2 NH4(+). It participates in nitrogen metabolism; urea degradation; CO(2) and NH(3) from urea (urease route): step 1/1. The sequence is that of Urease subunit alpha from Haemophilus influenzae (strain PittGG).